A 67-amino-acid polypeptide reads, in one-letter code: ATP synthase protein 8 (67 aa).

The helical transmembrane segment at Thr8–Met24 threads the bilayer. Lys54 is subject to N6-acetyllysine; alternate. N6-succinyllysine; alternate is present on Lys54. N6-acetyllysine is present on Lys57.

It belongs to the ATPase protein 8 family. In terms of assembly, F-type ATPases have 2 components, CF(1) - the catalytic core - and CF(0) - the membrane proton channel. Component of an ATP synthase complex composed of ATP5PB, ATP5MC1, ATP5F1E, ATP5PD, ATP5ME, ATP5PF, ATP5MF, MT-ATP6, MT-ATP8, ATP5F1A, ATP5F1B, ATP5F1D, ATP5F1C, ATP5PO, ATP5MG, ATP5MK and ATP5MJ. Interacts with PRICKLE3.

The protein resides in the mitochondrion membrane. Its function is as follows. Mitochondrial membrane ATP synthase (F(1)F(0) ATP synthase or Complex V) produces ATP from ADP in the presence of a proton gradient across the membrane which is generated by electron transport complexes of the respiratory chain. F-type ATPases consist of two structural domains, F(1) - containing the extramembraneous catalytic core and F(0) - containing the membrane proton channel, linked together by a central stalk and a peripheral stalk. During catalysis, ATP synthesis in the catalytic domain of F(1) is coupled via a rotary mechanism of the central stalk subunits to proton translocation. Part of the complex F(0) domain. Minor subunit located with subunit a in the membrane. The protein is ATP synthase protein 8 (MT-ATP8) of Artibeus jamaicensis (Jamaican fruit-eating bat).